A 239-amino-acid chain; its full sequence is Hydroxyacylglutathione hydrolase (239 aa).

His-54, His-56, Asp-58, His-59, His-112, Asp-131, and His-169 together coordinate Zn(2+).

Belongs to the metallo-beta-lactamase superfamily. Glyoxalase II family. As to quaternary structure, monomer. Zn(2+) serves as cofactor.

The catalysed reaction is an S-(2-hydroxyacyl)glutathione + H2O = a 2-hydroxy carboxylate + glutathione + H(+). It functions in the pathway secondary metabolite metabolism; methylglyoxal degradation; (R)-lactate from methylglyoxal: step 2/2. Thiolesterase that catalyzes the hydrolysis of S-D-lactoyl-glutathione to form glutathione and D-lactic acid. This is Hydroxyacylglutathione hydrolase from Pelagibacter ubique (strain HTCC1062).